The primary structure comprises 333 residues: MIDSSLPLTDIHRHLDGNIRAQTILDLGREFNIALPATTLDTLRPHVQVTSLEPDLVSFLAKLDWGVKVLASLEACRRVAYENVEDAARNGLHYVELRFSPRYMAMTHRLPVDGVVEAVIAGVQEGCRDFQVDARLIGILSRTFGEAACQEELAALLAHREGITALDLAGDELGFPGTLFRNHFNQARDAGWHITVHAGEAAGPESIWQAIRELGAERIGHGVKAVEDPALMDYLAEHRIGIESCLTSNVQTSTVASLAQHPLKQFLEHGVLASLNTDDPAVQGVDIIHEYTVAAPAAGLSREQIRQAQINGLTLAFLGEQEKAALIQRVAKG.

Residues His-12 and His-14 each contribute to the Zn(2+) site. Substrate contacts are provided by His-14, Asp-16, and Gly-170. Zn(2+) is bound at residue His-197. Glu-200 (proton donor) is an active-site residue. Asp-278 contacts Zn(2+). Asp-279 is a substrate binding site.

Belongs to the metallo-dependent hydrolases superfamily. Adenosine and AMP deaminases family. Adenosine deaminase subfamily. Zn(2+) serves as cofactor.

The enzyme catalyses adenosine + H2O + H(+) = inosine + NH4(+). The catalysed reaction is 2'-deoxyadenosine + H2O + H(+) = 2'-deoxyinosine + NH4(+). In terms of biological role, catalyzes the hydrolytic deamination of adenosine and 2-deoxyadenosine. This is Adenosine deaminase from Klebsiella pneumoniae subsp. pneumoniae (strain ATCC 700721 / MGH 78578).